A 247-amino-acid polypeptide reads, in one-letter code: 1-(5-phosphoribosyl)-5-[(5-phosphoribosylamino)methylideneamino] imidazole-4-carboxamide isomerase (247 aa).

The active-site Proton acceptor is Asp-8. Catalysis depends on Asp-130, which acts as the Proton donor.

The protein belongs to the HisA/HisF family.

It is found in the cytoplasm. The catalysed reaction is 1-(5-phospho-beta-D-ribosyl)-5-[(5-phospho-beta-D-ribosylamino)methylideneamino]imidazole-4-carboxamide = 5-[(5-phospho-1-deoxy-D-ribulos-1-ylimino)methylamino]-1-(5-phospho-beta-D-ribosyl)imidazole-4-carboxamide. The protein operates within amino-acid biosynthesis; L-histidine biosynthesis; L-histidine from 5-phospho-alpha-D-ribose 1-diphosphate: step 4/9. The polypeptide is 1-(5-phosphoribosyl)-5-[(5-phosphoribosylamino)methylideneamino] imidazole-4-carboxamide isomerase (Leptospira biflexa serovar Patoc (strain Patoc 1 / Ames)).